Here is a 316-residue protein sequence, read N- to C-terminus: MSFASETKKELTKLEMKECCEKAELSALLRMNGSLSFSNRRLSIDIQTENAAIARRIYTLLKKGYNVTVELLVRKKMRLKKNNVYIVRLVEKSREILADLQIVREDFSFIRNISQELIEKKCCKRSYLRGAFLAGGSVNNPETSSYHLEIFSLYKEHNDSICELMNGFDLNSKTLERRKGYITYLKEAEKITEFLNIIGAHNALLKFEDIRIVRDMRNSVNRLVNCETANLNKTIGAALRQIENIRYIDETVGLDILPDKLREIAQLRVNYQDVTLKELGEMVSGGKISKSGINHRLRKIDEIAEKLRAGETVVKK.

A DNA-binding region (H-T-H motif) is located at residues 275 to 309; the sequence is TLKELGEMVSGGKISKSGINHRLRKIDEIAEKLRA.

It belongs to the WhiA family.

Its function is as follows. Involved in cell division and chromosome segregation. This is Probable cell division protein WhiA from Bacillus cytotoxicus (strain DSM 22905 / CIP 110041 / 391-98 / NVH 391-98).